Here is an 828-residue protein sequence, read N- to C-terminus: DNA gyrase subunit A (828 aa).

Positions 32–497 (LPDVRDGLKP…EVLSLEDEDL (466 aa)) constitute a Topo IIA-type catalytic domain. Residue Tyr-120 is the O-(5'-phospho-DNA)-tyrosine intermediate of the active site. A GyrA-box motif is present at residues 524–530 (QKRGGRG).

It belongs to the type II topoisomerase GyrA/ParC subunit family. As to quaternary structure, heterotetramer, composed of two GyrA and two GyrB chains. In the heterotetramer, GyrA contains the active site tyrosine that forms a transient covalent intermediate with DNA, while GyrB binds cofactors and catalyzes ATP hydrolysis.

It localises to the cytoplasm. It carries out the reaction ATP-dependent breakage, passage and rejoining of double-stranded DNA.. Functionally, a type II topoisomerase that negatively supercoils closed circular double-stranded (ds) DNA in an ATP-dependent manner to modulate DNA topology and maintain chromosomes in an underwound state. Negative supercoiling favors strand separation, and DNA replication, transcription, recombination and repair, all of which involve strand separation. Also able to catalyze the interconversion of other topological isomers of dsDNA rings, including catenanes and knotted rings. Type II topoisomerases break and join 2 DNA strands simultaneously in an ATP-dependent manner. The sequence is that of DNA gyrase subunit A from Streptococcus pyogenes serotype M3 (strain ATCC BAA-595 / MGAS315).